The sequence spans 476 residues: ATP synthase subunit beta (476 aa).

154–161 (GGAGVGKT) contributes to the ATP binding site.

It belongs to the ATPase alpha/beta chains family. In terms of assembly, F-type ATPases have 2 components, CF(1) - the catalytic core - and CF(0) - the membrane proton channel. CF(1) has five subunits: alpha(3), beta(3), gamma(1), delta(1), epsilon(1). CF(0) has three main subunits: a(1), b(2) and c(9-12). The alpha and beta chains form an alternating ring which encloses part of the gamma chain. CF(1) is attached to CF(0) by a central stalk formed by the gamma and epsilon chains, while a peripheral stalk is formed by the delta and b chains.

The protein localises to the cell inner membrane. It carries out the reaction ATP + H2O + 4 H(+)(in) = ADP + phosphate + 5 H(+)(out). Produces ATP from ADP in the presence of a proton gradient across the membrane. The catalytic sites are hosted primarily by the beta subunits. This chain is ATP synthase subunit beta, found in Nitrobacter winogradskyi (strain ATCC 25391 / DSM 10237 / CIP 104748 / NCIMB 11846 / Nb-255).